A 501-amino-acid chain; its full sequence is Carboxypeptidase 1 (501 aa).

In terms of domain architecture, Peptidase M32 spans Ile-3–Ser-496. Positions His-234–Phe-236 match the HPF motif. The short motif at Asp-244–Thr-248 is the DXRXT element. His-265 serves as a coordination point for Zn(2+). An HEXXH motif is present at residues His-265–His-269. Glu-266 (proton donor/acceptor) is an active-site residue. Residues His-269 and Glu-295 each contribute to the Zn(2+) site. Residues His-294 to Gln-297 carry the HES/GQ motif. Residues Ile-347–Asp-352 carry the I/NRXXA/SD motif. Residues Gly-402 to Trp-409 carry the GXXQDXHW motif.

Belongs to the peptidase M32 family. As to quaternary structure, homodimer. Zn(2+) is required as a cofactor.

The catalysed reaction is Release of a C-terminal amino acid with broad specificity, except for -Pro.. Functionally, broad specificity carboxypetidase that releases amino acids sequentially from the C-terminus, including neutral, aromatic, polar and basic residues. Has lower activity with substrates ending with His or Trp. The protein is Carboxypeptidase 1 (ypwA) of Bacillus subtilis (strain 168).